Here is an 871-residue protein sequence, read N- to C-terminus: Pre-mRNA-processing factor 40 homolog B (871 aa).

WW domains lie at Gly92–Val125 and Leu133–Asp166. Lys148 carries the post-translational modification N6-acetyllysine. The tract at residues Glu171–Glu277 is disordered. Lys175 participates in a covalent cross-link: Glycyl lysine isopeptide (Lys-Gly) (interchain with G-Cter in SUMO2). Over residues Gln182–Gln191 the composition is skewed to low complexity. The segment covering Pro192–Val211 has biased composition (pro residues). Composition is skewed to low complexity over residues Pro212–Gly221 and Glu245–Pro255. 6 consecutive FF domains span residues Arg276–Gln330, Arg340–Phe397, Arg410–Ala470, Gln490–Glu550, Arg554–Lys610, and Arg625–Val682. The interval His690 to Gln871 is disordered. Residues Leu691 to His711 are compositionally biased toward basic residues. Over residues Ser739 to Gly756 the composition is skewed to low complexity. A Phosphoserine modification is found at Ser764. The span at Arg777–Ser793 shows a compositional bias: basic residues. The segment covering Glu803 to Gln824 has biased composition (basic and acidic residues). At Ser832 the chain carries Phosphoserine. A Glycyl lysine isopeptide (Lys-Gly) (interchain with G-Cter in SUMO2) cross-link involves residue Lys838. A Phosphoserine modification is found at Ser852.

This sequence belongs to the PRPF40 family. As to quaternary structure, interacts with the N-terminus of HD. In terms of tissue distribution, expressed in the striatum and cortex of the brain (at protein level). Highly expressed in testis, fetal kidney and fetal brain. Moderately expressed in pancreas, skeletal muscle, placenta, brain and heart. Weakly expressed in colon, ileum, ovary, prostate, spleen, kidney and fetal lung.

The protein resides in the nucleus speckle. Its function is as follows. May be involved in pre-mRNA splicing. This chain is Pre-mRNA-processing factor 40 homolog B (PRPF40B), found in Homo sapiens (Human).